The primary structure comprises 35 residues: Somatostatin (35 aa).

An intrachain disulfide couples cysteine 24 to cysteine 35.

Belongs to the somatostatin family.

The protein resides in the secreted. Its function is as follows. Somatostatin inhibits the release of somatotropin. This chain is Somatostatin (sst), found in Lampetra fluviatilis (European river lamprey).